The chain runs to 306 residues: Phenylcoumaran benzylic ether reductase POP1 (306 aa).

Residues 9–15 (GGTGYIG), Arg-34, and Lys-43 each bind NADP(+). The Proton acceptor role is filled by Lys-131. Residue Arg-135 participates in NADP(+) binding.

This sequence belongs to the NmrA-type oxidoreductase family. Isoflavone reductase subfamily.

The enzyme catalyses (-)-dehydrodiconiferyl alcohol + NADPH + H(+) = (S)-isodihydrodehydrodiconiferyl alcohol + NADP(+). It catalyses the reaction (+)-dehydrodiconiferyl alcohol + NADPH + H(+) = (R)-isodihydrodehydrodiconiferyl alcohol + NADP(+). It carries out the reaction (2R,3S)-dihydrodehydrodiconiferyl alcohol + NADPH + H(+) = (S)-tetrahydrodehydrodiconiferyl alcohol + NADP(+). The catalysed reaction is (2S,3R)-dihydrodehydrodiconiferyl alcohol + NADPH + H(+) = (R)-tetrahydrodehydrodiconiferyl alcohol + NADP(+). Oxidoreductase involved in lignan biosynthesis. Catalyzes the NADPH-dependent reduction of phenylcoumaran benzylic ethers. Converts dehydrodiconiferyl alcohol (DDC) to isodihydrodehydrodiconiferyl alcohol (IDDDC), and dihydrodehydrodiconiferyl alcohol (DDDC) to tetrahydrodehydrodiconiferyl alcohol (TDDC). In Populus trichocarpa (Western balsam poplar), this protein is Phenylcoumaran benzylic ether reductase POP1.